A 143-amino-acid polypeptide reads, in one-letter code: Large ribosomal subunit protein uL15 (143 aa).

Composition is skewed to basic residues over residues 1–13 (MIRK…KMRG) and 23–38 (KKHR…GNAG). The segment at 1–38 (MIRKSKKITKMRGSRTCGYGEAKKHRGAGHRGGRGNAG) is disordered.

Belongs to the universal ribosomal protein uL15 family. In terms of assembly, part of the 50S ribosomal subunit.

In terms of biological role, binds to the 23S rRNA. In Methanococcus maripaludis (strain C7 / ATCC BAA-1331), this protein is Large ribosomal subunit protein uL15.